A 132-amino-acid chain; its full sequence is Glycine cleavage system H protein (132 aa).

Positions Leu-24–Arg-106 constitute a Lipoyl-binding domain. Lys-65 is subject to N6-lipoyllysine.

Belongs to the GcvH family. As to quaternary structure, the glycine cleavage system is composed of four proteins: P, T, L and H. (R)-lipoate is required as a cofactor.

The glycine cleavage system catalyzes the degradation of glycine. The H protein shuttles the methylamine group of glycine from the P protein to the T protein. This is Glycine cleavage system H protein from Prochlorococcus marinus (strain MIT 9313).